We begin with the raw amino-acid sequence, 72 residues long: Large ribosomal subunit protein bL31 (72 aa).

Zn(2+) is bound by residues Cys-16, Cys-18, Cys-37, and Cys-40.

This sequence belongs to the bacterial ribosomal protein bL31 family. Type A subfamily. Part of the 50S ribosomal subunit. Requires Zn(2+) as cofactor.

Functionally, binds the 23S rRNA. The sequence is that of Large ribosomal subunit protein bL31 from Hahella chejuensis (strain KCTC 2396).